The sequence spans 696 residues: SLIT and NTRK-like protein 1 (696 aa).

The first 17 residues, Met-1–Gly-17, serve as a signal peptide directing secretion. The 40-residue stretch at Asn-18–Thr-57 folds into the LRRNT 1 domain. Residues Asn-18 to Pro-622 are Extracellular-facing. LRR repeat units follow at residues Gln-59 to Asn-80, Asn-83 to Gly-104, Gln-106 to Gly-128, Asp-131 to Asp-152, Lys-155 to Tyr-176, and Pro-178 to Glu-199. Positions Asn-212–Leu-263 constitute an LRRCT 1 domain. Positions Asn-265 to Asn-314 are disordered. The 42-residue stretch at Asn-332 to Lys-373 folds into the LRRNT 2 domain. LRR repeat units follow at residues Asn-376 to Asp-397, Asn-400 to Asn-421, Asp-424 to Gly-445, Asn-448 to Ala-469, Lys-472 to Gly-493, and Ser-495 to Asp-516. Positions Asn-529–Gln-580 constitute an LRRCT 2 domain. The chain crosses the membrane as a helical span at residues Gly-623–Leu-643. Over Arg-644–Asp-696 the chain is Cytoplasmic. At Ser-695 the chain carries Phosphoserine; by CK2.

Belongs to the SLITRK family. In terms of assembly, can form homodimers; homodimerization requires repeat LRR 2. Interacts with YWHAB, YWHAE, YWHAG, YWHAH, SFN, YWHAQ and YWHAZ. In terms of processing, undergoes proteolytic cleavage that results in shedding of the ectodomain and cleavage of the C-terminal cytoplasmic tail. Glycosylated. Phosphorylation at Ser-695 is necessary for proper function in promoting neurite outgrowth. As to expression, expressed predominantly in the frontal lobe of the cerebral cortex of the brain. Also expressed in some astrocytic brain tumors such as astrocytomas, oligodendrogliomas, glioblastomas, gangliogliomas and primitive neuroectodermal tumors.

It is found in the membrane. The protein resides in the secreted. The protein localises to the synapse. Functionally, it is involved in synaptogenesis and promotes excitatory synapse differentiation. Enhances neuronal dendrite outgrowth. This Homo sapiens (Human) protein is SLIT and NTRK-like protein 1 (SLITRK1).